A 260-amino-acid chain; its full sequence is 5'-nucleotidase SurE (260 aa).

A divalent metal cation contacts are provided by Asp10, Asp11, Ser41, and Asn95.

It belongs to the SurE nucleotidase family. A divalent metal cation serves as cofactor.

The protein resides in the cytoplasm. It catalyses the reaction a ribonucleoside 5'-phosphate + H2O = a ribonucleoside + phosphate. In terms of biological role, nucleotidase that shows phosphatase activity on nucleoside 5'-monophosphates. In Methanoregula boonei (strain DSM 21154 / JCM 14090 / 6A8), this protein is 5'-nucleotidase SurE.